A 339-amino-acid chain; its full sequence is N-acetyl-gamma-glutamyl-phosphate reductase (339 aa).

Cys145 is a catalytic residue.

Belongs to the NAGSA dehydrogenase family. Type 1 subfamily.

The protein resides in the cytoplasm. It catalyses the reaction N-acetyl-L-glutamate 5-semialdehyde + phosphate + NADP(+) = N-acetyl-L-glutamyl 5-phosphate + NADPH + H(+). It participates in amino-acid biosynthesis; L-arginine biosynthesis; N(2)-acetyl-L-ornithine from L-glutamate: step 3/4. Its function is as follows. Catalyzes the NADPH-dependent reduction of N-acetyl-5-glutamyl phosphate to yield N-acetyl-L-glutamate 5-semialdehyde. The protein is N-acetyl-gamma-glutamyl-phosphate reductase of Thermotoga sp. (strain RQ2).